The chain runs to 1293 residues: MTMGLWLKLLAFGFALLDTEVFVTGQTPTPSDELSTTENALLLPQSDPLPARTTESTPPSISERGNGSSETTYHPGVLSTLLPHLSPQPDSQTPSAGGADTQTFSSQADNPTLTPAPGGGTDPPGVPGERTVPGTIPADTAFPVDTPSLARNSSAASPTHTSNVSTTDISSGASLTTLTPSTLGLASTDPPSTTIATTTKQTCAAMFGNITVNYTYESSNQTFKADLKDVQNAKCGNEDCENVLNNLEECSQIKNISVSNDSCAPATTIDLYVPPGTDKFSLHDCTPKEKANTSICLEWKTKNLDFRKCNSDNISYVLHCEPENNTKCIRRNTFIPERCQLDNLRAQTNYTCVAEILYRGVKLVKNVINVQTDLGIPETPKPSCGDPAARKTLVSWPEPVSKPESASKPHGYVLCYKNNSEKCKSLPNNVTSFEVESLKPYKYYEVSLLAYVNGKIQRNGTAEKCNFHTKADRPDKVNGMKTSRPTDNSINVTCGPPYETNGPKTFYILVVRSGGSFVTKYNKTNCQFYVDNLYYSTDYEFLVSFHNGVYEGDSVIRNESTNFNAKALIIFLVFLIIVTSIALLVVLYKIYDLRKKRSSNLDEQQELVERDDEKQLMDVEPIHSDILLETYKRKIADEGRLFLAEFQSIPRVFSKFPIKDARKPHNQNKNRYVDILPYDYNRVELSEINGDAGSTYINASYIDGFKEPRKYIAAQGPRDETVDDFWRMIWEQKATVIVMVTRCEEGNRNKCAEYWPSMEEGTRAFKDIVVTINDHKRCPDYIIQKLNVAHKKEKATGREVTHIQFTSWPDHGVPEDPHLLLKLRRRVNAFSNFFSGPIVVHCSAGVGRTGTYIGIDAMLEGLEAEGKVDVYGYVVKLRRQRCLMVQVEAQYILIHQALVEYNQFGETEVNLSELHSCLHNMKKRDPPSDPSPLEAEYQRLPSYRSWRTQHIGNQEENKKKNRNSNVVPYDFNRVPLKHELEMSKESEPESDESSDDDSDSEETSKYINASFVMSYWKPEMMIAAQGPLKETIGDFWQMIFQRKVKVIVMLTELVNGDQEVCAQYWGEGKQTYGDMEVEMKDTNRASAYTLRTFELRHSKRKEPRTVYQYQCTTWKGEELPAEPKDLVSMIQDLKQKLPKASPEGMKYHKHASILVHCRDGSQQTGLFCALFNLLESAETEDVVDVFQVVKSLRKARPGVVCSYEQYQFLYDIIASIYPAQNGQVKKTNSQDKIEFHNEVDGGKQDANCVRPDGPLNKAQEDSRGVGTPEPTNSAEEPEHAANGSASPAPTQSS.

A signal peptide spans 1-25; the sequence is MTMGLWLKLLAFGFALLDTEVFVTG. Over 26–566 the chain is Extracellular; sequence QTPTPSDELS…RNESTNFNAK (541 aa). The segment at 43 to 174 is disordered; that stretch reads LPQSDPLPAR…STTDISSGAS (132 aa). Polar residues-rich tracts occupy residues 53-72, 88-110, and 149-169; these read TTES…SETT, QPDS…QADN, and LARN…TTDI. Residue Asn66 is glycosylated (N-linked (GlcNAc...) asparagine). N-linked (GlcNAc...) asparagine glycosylation is found at Asn152, Asn163, Asn209, Asn213, Asn220, Asn255, Asn260, Asn292, Asn313, Asn324, Asn349, Asn418, Asn429, Asn459, and Asn491. 2 Fibronectin type-III domains span residues 376 to 472 and 473 to 568; these read IPET…TKAD and RPDK…AKAL. The helical transmembrane segment at 567 to 588 threads the bilayer; sequence ALIIFLVFLIIVTSIALLVVLY. Residues 589–1293 are Cytoplasmic-facing; sequence KIYDLRKKRS…SASPAPTQSS (705 aa). Tyrosine-protein phosphatase domains lie at 642–901 and 933–1216; these read FLAE…LVEY and LEAE…IASI. Tyr672 is modified (phosphotyrosine). Residues Asp810, 842–848, and Gln886 contribute to the substrate site; that span reads CSAGVGR. The Phosphocysteine intermediate role is filled by Cys842. Ser964, Ser983, Ser986, Ser990, Ser993, Ser994, and Ser998 each carry phosphoserine. The tract at residues 980 to 1003 is disordered; sequence LEMSKESEPESDESSDDDSDSEET. Over residues 988–1001 the composition is skewed to acidic residues; sequence PESDESSDDDSDSE. Catalysis depends on Cys1157, which acts as the Phosphocysteine intermediate. Ser1229 carries the phosphoserine modification. Positions 1240-1293 are disordered; sequence DGGKQDANCVRPDGPLNKAQEDSRGVGTPEPTNSAEEPEHAANGSASPAPTQSS. Thr1267 carries the phosphothreonine modification. The segment covering 1283–1293 has biased composition (polar residues); it reads GSASPAPTQSS. Residue Ser1286 is modified to Phosphoserine.

It belongs to the protein-tyrosine phosphatase family. Receptor class 1/6 subfamily. In terms of assembly, interacts with SKAP1. Interacts with DPP4; the interaction is enhanced in an interleukin-12-dependent manner in activated lymphocytes. Binds GANAB and PRKCSH. Interacts with CD53; this interaction stabilizes PTPRC on the membrane and is required for optimal phosphatase activity. Interacts with CLEC10A. Heavily N- and O-glycosylated.

Its subcellular location is the cell membrane. It localises to the membrane raft. It is found in the synapse. The catalysed reaction is O-phospho-L-tyrosyl-[protein] + H2O = L-tyrosyl-[protein] + phosphate. Protein tyrosine-protein phosphatase required for T-cell activation through the antigen receptor. Acts as a positive regulator of T-cell coactivation upon binding to DPP4. The first PTPase domain has enzymatic activity, while the second one seems to affect the substrate specificity of the first one. Upon T-cell activation, recruits and dephosphorylates SKAP1 and FYN. Dephosphorylates LYN, and thereby modulates LYN activity. Interacts with CLEC10A at antigen presenting cell-T cell contact; CLEC10A on immature dendritic cells recognizes Tn antigen-carrying PTPRC/CD45 receptor on effector T cells and modulates T cell activation threshold to limit autoreactivity. In Mus musculus (Mouse), this protein is Receptor-type tyrosine-protein phosphatase C.